A 95-amino-acid chain; its full sequence is Aspartyl/glutamyl-tRNA(Asn/Gln) amidotransferase subunit C (95 aa).

This sequence belongs to the GatC family. Heterotrimer of A, B and C subunits.

It catalyses the reaction L-glutamyl-tRNA(Gln) + L-glutamine + ATP + H2O = L-glutaminyl-tRNA(Gln) + L-glutamate + ADP + phosphate + H(+). It carries out the reaction L-aspartyl-tRNA(Asn) + L-glutamine + ATP + H2O = L-asparaginyl-tRNA(Asn) + L-glutamate + ADP + phosphate + 2 H(+). In terms of biological role, allows the formation of correctly charged Asn-tRNA(Asn) or Gln-tRNA(Gln) through the transamidation of misacylated Asp-tRNA(Asn) or Glu-tRNA(Gln) in organisms which lack either or both of asparaginyl-tRNA or glutaminyl-tRNA synthetases. The reaction takes place in the presence of glutamine and ATP through an activated phospho-Asp-tRNA(Asn) or phospho-Glu-tRNA(Gln). This is Aspartyl/glutamyl-tRNA(Asn/Gln) amidotransferase subunit C from Rhizobium etli (strain CIAT 652).